Here is a 159-residue protein sequence, read N- to C-terminus: uncharacterized protein (159 aa).

The disordered stretch occupies residues 9-36 (VTSGNKEKKKKRSSAGLTGHAPPAADSS).

This is an uncharacterized protein from Caenorhabditis elegans.